Consider the following 131-residue polypeptide: Small ribosomal subunit protein uS11 (131 aa).

It belongs to the universal ribosomal protein uS11 family. In terms of assembly, part of the 30S ribosomal subunit. Interacts with proteins S7 and S18. Binds to IF-3.

Located on the platform of the 30S subunit, it bridges several disparate RNA helices of the 16S rRNA. Forms part of the Shine-Dalgarno cleft in the 70S ribosome. In Exiguobacterium sibiricum (strain DSM 17290 / CCUG 55495 / CIP 109462 / JCM 13490 / 255-15), this protein is Small ribosomal subunit protein uS11.